The sequence spans 265 residues: C-type lectin domain family 12 member A (265 aa).

The Cytoplasmic segment spans residues 1–43 (MSEEVTYADLQFQNSSEMEKIPEIGKFGEKAPPAPSHVWRPAA). The ITIM motif motif lies at 5 to 10 (VTYADL). At Y7 the chain carries Phosphotyrosine. The chain crosses the membrane as a helical; Signal-anchor for type II membrane protein span at residues 44-64 (LFLTLLCLLLLIGLGVLASMF). The Extracellular portion of the chain corresponds to 65 to 265 (HVTLKIEMKK…QLGSTYFREA (201 aa)). N-linked (GlcNAc...) asparagine glycans are attached at residues N88 and N98. 4 cysteine pairs are disulfide-bonded: C118/C130, C133/C144, C161/C248, and C227/C240. Positions 140–249 (HKDSCYFLSD…CTYKKRMICE (110 aa)) constitute a C-type lectin domain. N165 carries N-linked (GlcNAc...) asparagine glycosylation.

In terms of assembly, homodimer; disulfide-linked. Interacts (when the ITIM motif is phosphorylated) with PTPN6 and PTPN11. In terms of processing, phosphorylated at Tyr-7 by SRC in the ITIM motif following ligand-binding, promoting recruitment of tyrosine-protein phosphatases PTPN6 and PTPN11. Highly N-glycosylated; glycosylation varies between cell types. As to expression, preferentially expressed in lymphoid tissues and immune cells, including natural killer (NK) cells, T-cells, dendritic cells and monocytes or macrophages. Detected in spleen macrophage-rich red pulp and in lymph node (at protein level). Detected in peripheral blood leukocytes, dendritic cells, bone marrow, monocytes, mononuclear leukocytes and macrophages.

The protein resides in the cell membrane. Its function is as follows. Myeloid inhibitory C-type lectin receptor that acts as a negative regulator of myeloid cell activation. Myeloid cell inhibition is required to limit proinflammatory pathways and protect against excessive inflammation. Specifically recognizes and binds various structures, such as neutrophil extracellular traps (NETs) or monosodium urate crystals. Also acts as a pattern-recognition receptor for pathogen-associated molecules, such as plasmodium hemozoin or mycobacterial micolic acid. Ligand-binding induces phosphorylation of its ITIM motif, followed by recruitment of tyrosine-protein phosphatases PTPN6 and PTPN11, which counteract tyrosine-protein kinase SYK, thereby preventing myeloid cell activation. Acts as a pattern-recognition receptor for NETs in neutrophils: specifically recognizes DNA in NETs, leading to inhibit neutrophil activation and limit further NET formation. This regulation is essential for controlling key neutrophil responses and limit NET-mediated inflammatory conditions. Also recognizes dead cells by acting as a receptor for monosodium urate crystals, leading to down-regulate neutrophil activation. Binding to monosodium urate crystals also promotes the type I interferon response. Acts as an inhibitor of natural killer (NK) cell cytotoxicity. Also acts as an ihibitor of dendritic cell maturation in an IL10-dependent manner. The protein is C-type lectin domain family 12 member A of Homo sapiens (Human).